Here is a 307-residue protein sequence, read N- to C-terminus: Ribonuclease Z (307 aa).

Residues histidine 63, histidine 65, aspartate 67, histidine 68, histidine 141, aspartate 208, and histidine 266 each contribute to the Zn(2+) site. Aspartate 67 acts as the Proton acceptor in catalysis.

The protein belongs to the RNase Z family. Homodimer. It depends on Zn(2+) as a cofactor.

The catalysed reaction is Endonucleolytic cleavage of RNA, removing extra 3' nucleotides from tRNA precursor, generating 3' termini of tRNAs. A 3'-hydroxy group is left at the tRNA terminus and a 5'-phosphoryl group is left at the trailer molecule.. In terms of biological role, zinc phosphodiesterase, which displays some tRNA 3'-processing endonuclease activity. Probably involved in tRNA maturation, by removing a 3'-trailer from precursor tRNA. The polypeptide is Ribonuclease Z (Chlamydia pneumoniae (Chlamydophila pneumoniae)).